Consider the following 571-residue polypeptide: Urease subunit alpha (571 aa).

One can recognise a Urease domain in the interval 129–571; it reads GGIDTHIHFI…LPMAQRYFLF (443 aa). The Ni(2+) site is built by His-134, His-136, and Lys-217. Lys-217 carries the N6-carboxylysine modification. Residue His-219 coordinates substrate. 2 residues coordinate Ni(2+): His-246 and His-272. His-320 (proton donor) is an active-site residue. Asp-360 is a binding site for Ni(2+).

It belongs to the metallo-dependent hydrolases superfamily. Urease alpha subunit family. In terms of assembly, heterotrimer of UreA (gamma), UreB (beta) and UreC (alpha) subunits. Three heterotrimers associate to form the active enzyme. Ni cation is required as a cofactor. Carboxylation allows a single lysine to coordinate two nickel ions.

The protein localises to the cytoplasm. The catalysed reaction is urea + 2 H2O + H(+) = hydrogencarbonate + 2 NH4(+). Its pathway is nitrogen metabolism; urea degradation; CO(2) and NH(3) from urea (urease route): step 1/1. The protein is Urease subunit alpha of Cupriavidus pinatubonensis (strain JMP 134 / LMG 1197) (Cupriavidus necator (strain JMP 134)).